A 257-amino-acid polypeptide reads, in one-letter code: Spermidine/putrescine transport system permease protein PotC (257 aa).

Over 1–7 (MSRFFLR) the chain is Cytoplasmic. A helical transmembrane segment spans residues 8–27 (NAFMFVVYAYLYIPIIILVT). Topologically, residues 28 to 65 (NSFNKDRYGLSWKGFSWNWYERLFNNDTLIQAAIHSVT) are periplasmic. Residues 60 to 248 (AIHSVTIAFF…VLSLALVVLS (189 aa)) form the ABC transmembrane type-1 domain. Residues 66–85 (IAFFAATLATIVGGLTAIAL) form a helical membrane-spanning segment. Over 86-100 (YRYRFRGKQAVSGML) the chain is Cytoplasmic. The helical transmembrane segment at 101 to 120 (FIVMMSPDIVMAVSLLALFM) threads the bilayer. The Periplasmic segment spans residues 121-128 (VVGISLGF). A helical transmembrane segment spans residues 129 to 148 (WSLLLAHVTFCLPYVTVTIF). The Cytoplasmic segment spans residues 149-176 (SRLNGFDSRMLEAAKDLGASEVTILRKI). Residues 177 to 196 (ILPLALPAVVSGWLLSFTIS) form a helical membrane-spanning segment. Residues 197-231 (LDDVVVSSFVSGVSYEILPLRIFSLVKTGVTPEVN) are Periplasmic-facing. Residues 232-251 (ALATIMIVLSLALVVLSQLI) form a helical membrane-spanning segment. The Cytoplasmic segment spans residues 252-257 (TRKNNH).

The protein belongs to the binding-protein-dependent transport system permease family. CysTW subfamily.

The protein localises to the cell inner membrane. In terms of biological role, required for the activity of the bacterial periplasmic transport system of putrescine and spermidine. This Haemophilus influenzae (strain ATCC 51907 / DSM 11121 / KW20 / Rd) protein is Spermidine/putrescine transport system permease protein PotC (potC).